A 245-amino-acid polypeptide reads, in one-letter code: Probable phosphatase PMI1003 (245 aa).

Zn(2+) is bound by residues His-7, His-9, His-15, His-40, Glu-73, His-101, His-131, Asp-192, and His-194.

This sequence belongs to the PHP family. In terms of assembly, homotrimer. It depends on Zn(2+) as a cofactor.

In Proteus mirabilis (strain HI4320), this protein is Probable phosphatase PMI1003.